The chain runs to 160 residues: Nucleotide-binding protein MADE_1020535 (160 aa).

Belongs to the YajQ family.

Nucleotide-binding protein. The protein is Nucleotide-binding protein MADE_1020535 of Alteromonas mediterranea (strain DSM 17117 / CIP 110805 / LMG 28347 / Deep ecotype).